We begin with the raw amino-acid sequence, 758 residues long: Spastin (758 aa).

Residues 1–103 (MVRTKNQSSS…SPRSGHHHSY (103 aa)) are disordered. The Cytoplasmic segment spans residues 1-121 (MVRTKNQSSS…KQNLYVVSFP (121 aa)). Positions 1–210 (MVRTKNQSSS…RPIQPLEMAA (210 aa)) are required for localization to punctate cytoplasmic foci. Low complexity-rich tracts occupy residues 8 to 28 (SSSSSASSSSTKSPIKSSSGA), 43 to 58 (RSSSASNVAAVVAGGS), 66 to 76 (SSNRRSPGSSP), and 85 to 95 (TDDLTPTTCSP). Residues 122–142 (IIFLFNVLRSLIYQLFCIFRY) constitute an intramembrane region (helical). Topologically, residues 143–758 (LYGASTKVIY…WSQDYGDITI (616 aa)) are cytoplasmic. Polar residues-rich tracts occupy residues 169–180 (SKEQQQSLNHPS) and 189–198 (QEQQLSNQPQ). Residues 169 to 202 (SKEQQQSLNHPSELNREGDGQEQQLSNQPQRFRP) are disordered. The tract at residues 208-758 (MAANRPGGGY…WSQDYGDITI (551 aa)) is sufficient for interaction with microtubules and microtubule severing. The MIT domain maps to 233 to 308 (HRRAFEYISK…SMARDRLHFL (76 aa)). The disordered stretch occupies residues 353-454 (RVRSSGYGPK…GPSGSGASTP (102 aa)). Composition is skewed to polar residues over residues 390 to 406 (NKSQTLPRNLGSKTSVG) and 425 to 454 (QFSSGRNTPPQRSRTPINNNGPSGSGASTP). A required for interaction with microtubules region spans residues 443–455 (NNGPSGSGASTPV). 523 to 530 (GPPGNGKT) provides a ligand contact to ATP.

The protein belongs to the AAA ATPase family. Spastin subfamily. Homohexamer. The homohexamer is stabilized by ATP-binding. The homohexamer may adopt a ring conformation through which microtubules pass prior to being severed. Interacts with microtubules. Interacts with atl; may be involved in microtubule dynamics.

It is found in the membrane. The protein localises to the cytoplasm. It localises to the cytoskeleton. Its subcellular location is the microtubule organizing center. The protein resides in the centrosome. It is found in the chromosome. The protein localises to the lipid droplet. It catalyses the reaction n ATP + n H2O + a microtubule = n ADP + n phosphate + (n+1) alpha/beta tubulin heterodimers.. Its function is as follows. ATP-dependent microtubule severing protein. Stimulates microtubule minus-end depolymerization and poleward microtubule flux in the mitotic spindle. Regulates microtubule stability in the neuromuscular junction synapse. Involved in lipid metabolism by regulating the size and distribution of lipid droplets. Involved in axon regeneration by regulating microtubule severing. In Drosophila sechellia (Fruit fly), this protein is Spastin.